The chain runs to 395 residues: Mannan polymerase complexes subunit MNN9 (395 aa).

At 2–17 (SLSLVSYRLRKNPWVN) the chain is on the cytoplasmic side. A helical; Signal-anchor for type II membrane protein transmembrane segment spans residues 18 to 33 (IFLPVLAIFLIYIIFF). At 34–395 (QRDQSLLGLN…LVYHIEEENH (362 aa)) the chain is on the lumenal side.

Belongs to the ANP1/MMN9/VAN1 family. As to quaternary structure, the M-Pol I complex contains MNN9 and VAN1. The M-Pol II complex is composed of ANP1, MNN9, MNN10, MNN11 and HOC1.

It is found in the endoplasmic reticulum membrane. The protein resides in the golgi apparatus membrane. The protein operates within protein modification; protein glycosylation. Its function is as follows. The M-Pol I and M-Pol II complexes possess alpha-1,6-mannosyltransferase activity and are probably involved in the elongation of the mannan backbone of N-linked glycans on cell wall and periplasmic proteins. May also provide alpha-1,2-mannosyltransferase activity to the M-Pol I complex. This is Mannan polymerase complexes subunit MNN9 (MNN9) from Saccharomyces cerevisiae (strain ATCC 204508 / S288c) (Baker's yeast).